Consider the following 220-residue polypeptide: Probable metallo-hydrolase YybB (220 aa).

Histidine 67, histidine 69, aspartate 71, histidine 72, histidine 139, aspartate 158, and histidine 200 together coordinate Zn(2+).

The protein belongs to the metallo-beta-lactamase superfamily. Zn(2+) is required as a cofactor.

In Bacillus subtilis (strain 168), this protein is Probable metallo-hydrolase YybB (yybB).